The primary structure comprises 619 residues: TOX high mobility group box family member 4 (619 aa).

Disordered stretches follow at residues 155–227 (LSLG…QKPV), 304–335 (ELDP…TESP), and 436–458 (LPPP…QQQV). Position 176 is a phosphothreonine (Thr-176). Phosphoserine is present on residues Ser-178 and Ser-182. Basic and acidic residues predominate over residues 183–193 (LHEDGVDDFRR). Over residues 208–218 (KQKAPKKRKKK) the composition is skewed to basic residues. A Nuclear localization signal motif is present at residues 213–218 (KKRKKK). Residues 223–291 (PQKPVSAYAL…EYLKALAAYK (69 aa)) constitute a DNA-binding region (HMG box). Position 313 is a phosphothreonine (Thr-313). Position 315 is a phosphoserine (Ser-315). Over residues 320-335 (TTADPASPAPASTESP) the composition is skewed to low complexity. Residues 436-453 (LPPPRLQPPPLQQMPQPP) are compositionally biased toward pro residues. An Asymmetric dimethylarginine modification is found at Arg-479. Residues Ser-531, Ser-548, Ser-550, Ser-558, Ser-560, and Ser-565 each carry the phosphoserine modification.

As to quaternary structure, component of the PNUTS-PP1 phosphatase complex, composed of PPP1R10/PNUTS, TOX4, WDR82 and PPP1CA or PPP1CB or PPP1CC. Interacts with PPP1R10/PNUTS. Interacts with FOXO1 and CREB1 (increased by cAMP); FOXO1 and CREB1 are required for full induction of TOX4-dependent activity and the interactions are inhibited by insulin.

Its subcellular location is the nucleus. The protein resides in the chromosome. Its activity is regulated as follows. In liver, recruited to target gene promoters following treatment with dexamethasone and cAMP. Binding is decreased in presence of insulin. Transcription factor that modulates cell fate reprogramming from the somatic state to the pluripotent and neuronal fate. In liver, controls the expression of hormone-regulated gluconeogenic genes such as G6PC1 and PCK1. This regulation is independent of the insulin receptor activation. Also acts as a regulatory component of protein phosphatase 1 (PP1) complexes. Component of the PNUTS-PP1 protein phosphatase complex, a PP1 complex that regulates RNA polymerase II transcription pause-release. PNUTS-PP1 also plays a role in the control of chromatin structure and cell cycle progression during the transition from mitosis into interphase. This chain is TOX high mobility group box family member 4 (Tox4), found in Rattus norvegicus (Rat).